Consider the following 572-residue polypeptide: Mitochondrial distribution and morphology protein 34 (572 aa).

The SMP-LTD domain maps to 1 to 195 (MAFNFNWSPL…LPAIIHRLSL (195 aa)). Disordered stretches follow at residues 212 to 236 (TASA…VDAL), 355 to 426 (GAGR…PDND), 487 to 507 (HGAS…GSSR), and 552 to 572 (ACGP…AYGH). Over residues 358-370 (RHSKAHARKRKKR) the composition is skewed to basic residues. A compositionally biased stretch (basic and acidic residues) spans 371 to 381 (VVDLRRPKTTD). The segment covering 387–400 (SDESSFTESTSAPS) has biased composition (polar residues).

It belongs to the MDM34 family. Component of the ER-mitochondria encounter structure (ERMES) or MDM complex, composed of mmm1, mdm10, mdm12 and mdm34.

It localises to the mitochondrion outer membrane. Functionally, component of the ERMES/MDM complex, which serves as a molecular tether to connect the endoplasmic reticulum (ER) and mitochondria. Components of this complex are involved in the control of mitochondrial shape and protein biogenesis, and function in nonvesicular lipid trafficking between the ER and mitochondria. Mdm34 is required for the interaction of the ER-resident membrane protein mmm1 and the outer mitochondrial membrane-resident beta-barrel protein mdm10. This Aspergillus fumigatus (strain ATCC MYA-4609 / CBS 101355 / FGSC A1100 / Af293) (Neosartorya fumigata) protein is Mitochondrial distribution and morphology protein 34.